Reading from the N-terminus, the 101-residue chain is NADH-quinone oxidoreductase subunit K (101 aa).

3 consecutive transmembrane segments (helical) span residues 4–24 (LSHY…GIFL), 30–50 (IILL…FVAF), and 61–81 (IFVF…LAIL).

Belongs to the complex I subunit 4L family. As to quaternary structure, NDH-1 is composed of 14 different subunits. Subunits NuoA, H, J, K, L, M, N constitute the membrane sector of the complex.

The protein resides in the cell inner membrane. It carries out the reaction a quinone + NADH + 5 H(+)(in) = a quinol + NAD(+) + 4 H(+)(out). NDH-1 shuttles electrons from NADH, via FMN and iron-sulfur (Fe-S) centers, to quinones in the respiratory chain. The immediate electron acceptor for the enzyme in this species is believed to be ubiquinone. Couples the redox reaction to proton translocation (for every two electrons transferred, four hydrogen ions are translocated across the cytoplasmic membrane), and thus conserves the redox energy in a proton gradient. In Nitrosomonas eutropha (strain DSM 101675 / C91 / Nm57), this protein is NADH-quinone oxidoreductase subunit K.